A 1132-amino-acid chain; its full sequence is Telomerase reverse transcriptase (1132 aa).

The interval 1 to 66 is disordered; it reads MSAKKPVQSK…NQNNANSGGN (66 aa). 2 stretches are compositionally biased toward polar residues: residues 9–26 and 45–55; these read SKLNIGNPTIPVTSNRST and QSQNTTTGAFR. Residues 602–956 enclose the Reverse transcriptase domain; sequence KEMRIFCESQ…DLFHWIGISI (355 aa). 3 residues coordinate Mg(2+): Asp-708, Asp-886, and Asp-887.

This sequence belongs to the reverse transcriptase family. Telomerase subfamily.

It is found in the nucleus. The protein resides in the chromosome. Its subcellular location is the telomere. It carries out the reaction DNA(n) + a 2'-deoxyribonucleoside 5'-triphosphate = DNA(n+1) + diphosphate. In terms of biological role, telomerase is a ribonucleoprotein enzyme essential for the replication of chromosome termini in most eukaryotes. It elongates telomeres. It is a reverse transcriptase that adds simple sequence repeats to chromosome ends by copying a template sequence within the RNA component of the enzyme. The polypeptide is Telomerase reverse transcriptase (TERT) (Oxytricha trifallax (Sterkiella histriomuscorum)).